Consider the following 115-residue polypeptide: DNA-binding protein PYRAB09250 (115 aa).

This sequence belongs to the PDCD5 family.

This is DNA-binding protein PYRAB09250 from Pyrococcus abyssi (strain GE5 / Orsay).